The chain runs to 699 residues: Polyribonucleotide nucleotidyltransferase (699 aa).

Mg(2+) contacts are provided by Asp-485 and Asp-491. Residues 552–611 (PRITTIKINPEKIRDVIGKGGAVIRALTEETGTTIELEDDGTVKIASSNGEATKEAIRRI) form the KH domain. The region spanning 621–689 (GRIYNGKVIR…RQGRVRLSIK (69 aa)) is the S1 motif domain.

Belongs to the polyribonucleotide nucleotidyltransferase family. As to quaternary structure, component of the RNA degradosome, which is a multiprotein complex involved in RNA processing and mRNA degradation. Mg(2+) is required as a cofactor.

It is found in the cytoplasm. The catalysed reaction is RNA(n+1) + phosphate = RNA(n) + a ribonucleoside 5'-diphosphate. In terms of biological role, involved in mRNA degradation. Catalyzes the phosphorolysis of single-stranded polyribonucleotides processively in the 3'- to 5'-direction. The protein is Polyribonucleotide nucleotidyltransferase of Shewanella sp. (strain MR-4).